We begin with the raw amino-acid sequence, 573 residues long: Plasmepsin X (573 aa).

An N-terminal signal peptide occupies residues methionine 1–cysteine 26. The propeptide occupies threonine 27–leucine 221. Cystine bridges form between cysteine 39/cysteine 51 and cysteine 42/cysteine 48. The tract at residues lysine 167 to asparagine 211 is disordered. A compositionally biased stretch (acidic residues) spans asparagine 183 to leucine 203. The Peptidase A1 domain occupies phenylalanine 248–alanine 567. Aspartate 266 is an active-site residue. The cysteines at positions 279 and 284 are disulfide-linked. Asparagine 334 carries an N-linked (GlcNAc...) asparagine glycan. The cysteines at positions 447 and 448 are disulfide-linked. Aspartate 457 is a catalytic residue. A disulfide bond links cysteine 482 and cysteine 521.

Belongs to the peptidase A1 family. In terms of processing, autocleaved into a p16 prodomain form and two mature forms p44 and p51.

It is found in the cytoplasmic vesicle. It localises to the secretory vesicle. With respect to regulation, inhibited by aminohydantoin compounds such as CWHM-117. Its function is as follows. During the asexual blood stage, processes key proteins essential for merozoite egress and invasion of host erythrocytes. Cleaves and activates proteases SUB1 and SUB2. May process members of the EBL and Rh protein families. Also cleaves apical membrane protein AMA1. During the mosquito vector stage and probably in ookinetes, cleaves CelTOS. This Plasmodium falciparum (isolate NF54) protein is Plasmepsin X.